A 242-amino-acid chain; its full sequence is MKRLLAISSLTLLASLVLLVVSPARSLAAQDEVTVVDALADAADSEDGDHDHDHEGDDHGHDEAAGDEHGHGDGDHAATPLLSFDGGSAIWNLIIFLCVLAILSKFVWPAVLGGLQAREEKIREDLESAEKASAEAKQMLSDYQLKLDEAASQVQTMLADARRDAEANGQKIVDAAKVEAAAQRERALSDIENAKKVAMAEMAGQTSKLAMQVARSVVGRELSADDHADLIRQSMERLPSQN.

The chain crosses the membrane as a helical span at residues 4-24 (LLAISSLTLLASLVLLVVSPA). Residues 43 to 74 (ADSEDGDHDHDHEGDDHGHDEAAGDEHGHGDG) are disordered. Basic and acidic residues predominate over residues 49–74 (DHDHDHEGDDHGHDEAAGDEHGHGDG).

Belongs to the ATPase B chain family. F-type ATPases have 2 components, F(1) - the catalytic core - and F(0) - the membrane proton channel. F(1) has five subunits: alpha(3), beta(3), gamma(1), delta(1), epsilon(1). F(0) has three main subunits: a(1), b(2) and c(10-14). The alpha and beta chains form an alternating ring which encloses part of the gamma chain. F(1) is attached to F(0) by a central stalk formed by the gamma and epsilon chains, while a peripheral stalk is formed by the delta and b chains.

The protein localises to the cell inner membrane. F(1)F(0) ATP synthase produces ATP from ADP in the presence of a proton or sodium gradient. F-type ATPases consist of two structural domains, F(1) containing the extramembraneous catalytic core and F(0) containing the membrane proton channel, linked together by a central stalk and a peripheral stalk. During catalysis, ATP synthesis in the catalytic domain of F(1) is coupled via a rotary mechanism of the central stalk subunits to proton translocation. Its function is as follows. Component of the F(0) channel, it forms part of the peripheral stalk, linking F(1) to F(0). The sequence is that of ATP synthase subunit b 2 from Rhodopirellula baltica (strain DSM 10527 / NCIMB 13988 / SH1).